The following is a 167-amino-acid chain: Large ribosomal subunit protein uL10 (167 aa).

The protein belongs to the universal ribosomal protein uL10 family. Part of the ribosomal stalk of the 50S ribosomal subunit. The N-terminus interacts with L11 and the large rRNA to form the base of the stalk. The C-terminus forms an elongated spine to which L12 dimers bind in a sequential fashion forming a multimeric L10(L12)X complex.

In terms of biological role, forms part of the ribosomal stalk, playing a central role in the interaction of the ribosome with GTP-bound translation factors. The protein is Large ribosomal subunit protein uL10 of Dichelobacter nodosus (strain VCS1703A).